Here is a 277-residue protein sequence, read N- to C-terminus: Large ribosomal subunit protein uL2 (277 aa).

Disordered stretches follow at residues lysine 37–histidine 60 and valine 223–aspartate 265. The span at serine 39 to isoleucine 49 shows a compositional bias: polar residues. Residues threonine 50–histidine 60 are compositionally biased toward basic residues. Residues aspartate 229–glutamate 244 are compositionally biased toward basic and acidic residues.

The protein belongs to the universal ribosomal protein uL2 family. As to quaternary structure, part of the 50S ribosomal subunit. Forms a bridge to the 30S subunit in the 70S ribosome.

In terms of biological role, one of the primary rRNA binding proteins. Required for association of the 30S and 50S subunits to form the 70S ribosome, for tRNA binding and peptide bond formation. It has been suggested to have peptidyltransferase activity; this is somewhat controversial. Makes several contacts with the 16S rRNA in the 70S ribosome. In Neisseria meningitidis serogroup C (strain 053442), this protein is Large ribosomal subunit protein uL2.